We begin with the raw amino-acid sequence, 130 residues long: uncharacterized protein (130 aa).

The interval 23-130 is disordered; that stretch reads SHLRLLPTAN…GAHQLSSPSS (108 aa). A compositionally biased stretch (polar residues) spans 30-45; the sequence is TANSPSGSNQPTNPNR.

This is an uncharacterized protein from Homo sapiens (Human).